The chain runs to 388 residues: Beta-hexosaminidase LpqI (388 aa).

The first 19 residues, 1 to 19, serve as a signal peptide directing secretion; that stretch reads MAFPRTLAILAAAAALVVA. Cys-20 is lipidated: N-palmitoyl cysteine. Residue Cys-20 is the site of S-diacylglycerol cysteine attachment. Residues Asp-123, Arg-131, Arg-193, and 223–224 each bind substrate; that span reads KH. The active-site Proton donor/acceptor is the His-236. Catalysis depends on Asp-311, which acts as the Nucleophile.

This sequence belongs to the glycosyl hydrolase 3 family.

It localises to the cell inner membrane. The catalysed reaction is Hydrolysis of terminal non-reducing N-acetyl-D-hexosamine residues in N-acetyl-beta-D-hexosaminides.. It functions in the pathway cell wall biogenesis; peptidoglycan recycling. Its function is as follows. Plays a role in peptidoglycan recycling by cleaving the terminal beta-1,4-linked N-acetylglucosamine (GlcNAc) from peptidoglycan fragments. Acts as a regulator for GlcNAc-MurNAc levels by cleaving disaccharides and allowing the breakdown of MurNAc. This chain is Beta-hexosaminidase LpqI, found in Mycobacterium tuberculosis (strain ATCC 25618 / H37Rv).